The primary structure comprises 93 residues: N-acetyl-S-hydroxy-L-cysteine reductase (93 aa).

Residues 1-93 (MSDVVNIVVW…NHAQIKEAKR (93 aa)) form the Glutaredoxin domain. The cysteines at positions 15 and 18 are disulfide-linked.

It belongs to the glutaredoxin family.

The catalysed reaction is N-acetyl-S-hydroxy-L-cysteine + AH2 = N-acetyl-L-cysteine + A + H2O. Its pathway is amino-acid metabolism. In terms of biological role, involved in a cysteine salvage pathway from S-alkylcysteine. Catalyzes the reduction of N-acetyl-S-hydroxy-L-cysteine (N-acetyl-L-cysteine sulfenic acid) to N-acetyl-L-cysteine. This pathway is likely important in the catabolism of alkylated cysteine generated by proteolysis of alkylated glutathione formed in the detoxification of a wide range of electrophiles. The sequence is that of N-acetyl-S-hydroxy-L-cysteine reductase from Bacillus subtilis (strain 168).